Here is a 461-residue protein sequence, read N- to C-terminus: Elongation factor 1-alpha, oocyte form (461 aa).

A N,N,N-trimethylglycine modification is found at G2. The 238-residue stretch at 5–242 (KIHINIVVIG…DCIIPPQRPT (238 aa)) folds into the tr-type G domain. The tract at residues 14 to 21 (GHVDSGKS) is G1. Residue 14 to 21 (GHVDSGKS) participates in GTP binding. Residues 70 to 74 (GITID) are G2. A G3 region spans residues 91–94 (DAPG). GTP is bound by residues 91 to 95 (DAPGH) and 153 to 156 (NKMD). Residues 153–156 (NKMD) are G4. Positions 194 to 196 (SGW) are G5. A 5-glutamyl glycerylphosphorylethanolamine mark is found at E301 and E374.

It belongs to the TRAFAC class translation factor GTPase superfamily. Classic translation factor GTPase family. EF-Tu/EF-1A subfamily. As to expression, oocyte.

The protein localises to the cytoplasm. This protein promotes the GTP-dependent binding of aminoacyl-tRNA to the A-site of ribosomes during protein biosynthesis. The protein is Elongation factor 1-alpha, oocyte form of Xenopus laevis (African clawed frog).